The sequence spans 312 residues: Large ribosomal subunit protein uL10 (312 aa).

K14 is covalently cross-linked (Glycyl lysine isopeptide (Lys-Gly) (interchain with G-Cter in ubiquitin)). S68 carries the post-translational modification Phosphoserine. Residues K97 and K144 each participate in a glycyl lysine isopeptide (Lys-Gly) (interchain with G-Cter in ubiquitin) cross-link. Residues 199–230 (SSILDITDEELVSHFVSAVSTIASISLAIGYP) form an interaction with P1A-P2B region. Residues 231–258 (TLPSVGHTLINNYKDLLAVAIAASYHYP) form an interaction with P1B-P2A region. Low complexity predominate over residues 278–293 (PAATSAASGDAAPAEE). The segment at 278-312 (PAATSAASGDAAPAEEAAAEEEEESDDDMGFGLFD) is disordered. The span at 294-306 (AAAEEEEESDDDM) shows a compositional bias: acidic residues. Residue S302 is modified to Phosphoserine; by CK2.

It belongs to the universal ribosomal protein uL10 family. As to quaternary structure, component of the large ribosomal subunit (LSU). Mature yeast ribosomes consist of a small (40S) and a large (60S) subunit. The 40S small subunit contains 1 molecule of ribosomal RNA (18S rRNA) and 33 different proteins (encoded by 57 genes). The large 60S subunit contains 3 rRNA molecules (25S, 5.8S and 5S rRNA) and 46 different proteins (encoded by 81 genes). The 5 acidic ribosomal P-proteins form the stalk structure of the 60S subunit. They are organized as a pentameric complex in which uL10/P0 interacts with 2 heterodimers, P1A-P2B and P1B-P2A. uL10 directly interacts with 28S rRNA. uL10 interacts with YFL034W.

The protein localises to the cytoplasm. Functionally, component of the ribosome, a large ribonucleoprotein complex responsible for the synthesis of proteins in the cell. The small ribosomal subunit (SSU) binds messenger RNAs (mRNAs) and translates the encoded message by selecting cognate aminoacyl-transfer RNA (tRNA) molecules. The large subunit (LSU) contains the ribosomal catalytic site termed the peptidyl transferase center (PTC), which catalyzes the formation of peptide bonds, thereby polymerizing the amino acids delivered by tRNAs into a polypeptide chain. The nascent polypeptides leave the ribosome through a tunnel in the LSU and interact with protein factors that function in enzymatic processing, targeting, and the membrane insertion of nascent chains at the exit of the ribosomal tunnel. uL10 forms part of the P stalk that participates in recruiting G proteins to the ribosome. This Saccharomyces cerevisiae (strain ATCC 204508 / S288c) (Baker's yeast) protein is Large ribosomal subunit protein uL10.